A 317-amino-acid chain; its full sequence is Melanocyte-stimulating hormone receptor (317 aa).

Over 1–37 the chain is Extracellular; the sequence is MPAQGSQRSLLGSLNSTLMATSSLGLSANQSGPQCLE. N-linked (GlcNAc...) asparagine glycosylation is found at asparagine 15 and asparagine 29. The chain crosses the membrane as a helical span at residues 38-63; the sequence is VSVPDGLFLCLGLVSLVENMLVVAAI. Residues 64–72 are Cytoplasmic-facing; it reads AKNRNLHSP. Residues 73 to 93 traverse the membrane as a helical segment; the sequence is MYCFICCLALSDLLVSVSNVL. At 94 to 118 the chain is on the extracellular side; sequence ETAVMLLLEAGALAAQATVVQQLDN. Residues 119–140 traverse the membrane as a helical segment; it reads IIDVLVCSSMVSSLCFLGAIAM. Residues 141-163 lie on the Cytoplasmic side of the membrane; it reads DRYISIFYALRYHSIVTLSRAQW. The chain crosses the membrane as a helical span at residues 164 to 183; the sequence is ATAAVWAAGILSSTLFIAYY. Residues 184 to 191 lie on the Extracellular side of the membrane; the sequence is DHTAVLLC. A helical membrane pass occupies residues 192-211; sequence LVVFFLAMLVLMAVLYAHML. Residues 212 to 240 lie on the Cytoplasmic side of the membrane; that stretch reads TQACQHVQGITRLHKRQHLVQQGFGLKGA. A helical transmembrane segment spans residues 241-266; that stretch reads ATLTILLGVFLLCWGPFFLHLTLIAV. The Extracellular portion of the chain corresponds to 267–279; it reads CPQHPTCSCVFKN. A helical membrane pass occupies residues 280 to 300; that stretch reads FKLFLALIICNAIVDPLIYAF. Topologically, residues 301-317 are cytoplasmic; sequence RXQELRKTLKEVLLFSW.

It belongs to the G-protein coupled receptor 1 family. Interacts with MGRN1, but does not undergo MGRN1-mediated ubiquitination; this interaction competes with GNAS-binding and thus inhibits agonist-induced cAMP production. Interacts with OPN3; the interaction results in a decrease in MC1R-mediated cAMP signaling and ultimately a decrease in melanin production in melanocytes.

It localises to the cell membrane. Its function is as follows. Receptor for MSH (alpha, beta and gamma) and ACTH. The activity of this receptor is mediated by G proteins which activate adenylate cyclase. Mediates melanogenesis, the production of eumelanin (black/brown) and phaeomelanin (red/yellow), via regulation of cAMP signaling in melanocytes. The sequence is that of Melanocyte-stimulating hormone receptor (MC1R) from Loris tardigradus (Slender loris).